A 437-amino-acid polypeptide reads, in one-letter code: GTPase Obg (437 aa).

One can recognise an Obg domain in the interval 2–160 (SLFLDTARIE…KILLLELRVL (159 aa)). The region spanning 161-338 (ADVGLVGFPS…LLARTSELLA (178 aa)) is the OBG-type G domain. Residues 167–174 (GFPSVGKS), 192–196 (FTTIT), 214–217 (DMPG), 284–287 (NKMD), and 319–321 (SGL) contribute to the GTP site. Mg(2+) contacts are provided by Ser174 and Thr194. An OCT domain is found at 359 to 437 (GFEEEEKPFK…IQKFEFEFVD (79 aa)).

This sequence belongs to the TRAFAC class OBG-HflX-like GTPase superfamily. OBG GTPase family. In terms of assembly, monomer. Mg(2+) is required as a cofactor.

It localises to the cytoplasm. An essential GTPase which binds GTP, GDP and possibly (p)ppGpp with moderate affinity, with high nucleotide exchange rates and a fairly low GTP hydrolysis rate. Plays a role in control of the cell cycle, stress response, ribosome biogenesis and in those bacteria that undergo differentiation, in morphogenesis control. In Lactococcus lactis subsp. lactis (strain IL1403) (Streptococcus lactis), this protein is GTPase Obg.